The chain runs to 312 residues: Protein lon-1 (312 aa).

The signal sequence occupies residues 1–18 (MNYLLTALIALLAPISVA). An SCP domain is found at 87-209 (EHNRYRRMVP…GHRNVFVCHY (123 aa)). Residue Asn-142 is glycosylated (N-linked (GlcNAc...) asparagine). Residues 265-284 (TTTTESTTTSTTTEEPTTTC) show a composition bias toward low complexity. The disordered stretch occupies residues 265 to 312 (TTTTESTTTSTTTEEPTTTCEPDEPEAEGADNNQEEEEENNDGFRMRV). Acidic residues predominate over residues 285 to 305 (EPDEPEAEGADNNQEEEEENN).

This sequence belongs to the CRISP family. In terms of tissue distribution, expressed in hypodermal tissues.

Functionally, regulates body size morphogenesis, but does not affect male tail development. In Caenorhabditis elegans, this protein is Protein lon-1 (lon-1).